A 187-amino-acid chain; its full sequence is Putative acyl-coenzyme A oxidase At3g06690 (187 aa).

A disordered region spans residues 1–21 (MTKEPIYSPRMLHRDPDSPRP).

It belongs to the acyl-CoA oxidase family.

It carries out the reaction a 2,3-saturated acyl-CoA + O2 = a (2E)-enoyl-CoA + H2O2. This Arabidopsis thaliana (Mouse-ear cress) protein is Putative acyl-coenzyme A oxidase At3g06690.